Here is a 717-residue protein sequence, read N- to C-terminus: Glycine--tRNA ligase beta subunit (717 aa).

It belongs to the class-II aminoacyl-tRNA synthetase family. Tetramer of two alpha and two beta subunits.

The protein resides in the cytoplasm. The catalysed reaction is tRNA(Gly) + glycine + ATP = glycyl-tRNA(Gly) + AMP + diphosphate. This Gloeothece citriformis (strain PCC 7424) (Cyanothece sp. (strain PCC 7424)) protein is Glycine--tRNA ligase beta subunit.